The sequence spans 3110 residues: Huntingtin (3110 aa).

The segment at 1 to 58 (MKAFESLKSFQQQQQQQQPPPQPPPPPPPPPQPPQPPPQGQPPPPPPLPGPAEEPLHR) is disordered. Residue lysine 2 is modified to N6-acetyllysine. Pro residues predominate over residues 18 to 52 (QPPPQPPPPPPPPPQPPQPPPQGQPPPPPPLPGPA). N6-acetyllysine occurs at positions 146 and 204. HEAT repeat units lie at residues 174 to 211 (PYLV…SFGN) and 216 to 253 (NEIK…HSRR). The residue at position 313 (lysine 313) is an N6-acetyllysine. A phosphoserine mark is found at serine 387, serine 389, and serine 402. Position 412 is an N6-acetyllysine (lysine 412). The interaction with ZDHHC17 stretch occupies residues 462-473 (GHDIITEQPRSQ). A disordered region spans residues 487–549 (DLTSAATDGD…PDSAVTPSDS (63 aa)). Residues 521–549 (DGTQASSPISDSSQTTTEGPDSAVTPSDS) are compositionally biased toward polar residues. Residue glycine 522 is the site of N-myristoyl glycine attachment. Phosphoserine is present on residues serine 611 and serine 614. HEAT repeat units lie at residues 773–810 (FSLV…SLCS) and 873–911 (KLQE…KLFY). A disordered region spans residues 1137-1195 (KAALPSLTNPPSLSPIRRKGKEKEPGEQTSTPMSPKKGGEASTASRQSDTSGPVTASKS). Low complexity predominate over residues 1140 to 1151 (LPSLTNPPSLSP). Phosphoserine; by CDK5 occurs at positions 1150 and 1170. The segment covering 1178–1195 (STASRQSDTSGPVTASKS) has biased composition (polar residues). The HEAT 5 repeat unit spans residues 1395-1432 (LFEPLVIKALKQYTTTTSVQLQKQVLDLLAQLVQLRVN). At serine 1845 the chain carries Phosphoserine. A Nuclear export signal motif is present at residues 2363 to 2372 (IVVSLARLPL). The disordered stretch occupies residues 2601–2628 (EEEWDEEEEEEADAPAPTSPPVSPVNSR). Positions 2602-2613 (EEWDEEEEEEAD) are enriched in acidic residues.

This sequence belongs to the huntingtin family. As to quaternary structure, interacts with PFN1. Interacts through its N-terminus with PRPF40A. Interacts with PQBP1. Interacts with SETD2. Interacts with SH3GLB1. Interacts with SYVN. Interacts with TPR; the interaction is inhibited by forms of Huntingtin with expanded polyglutamine stretch. Interacts with ZDHHC13 (via ANK repeats). Interacts with ZDHHC17 (via ANK repeats). Interacts with F8A1/F8A2/F8A3. Found in a complex with F8A1/F8A2/F8A3, HTT and RAB5A; mediates the recruitment of HTT by RAB5A. Phosphorylation at Ser-1150 and Ser-1170 by CDK5 in response to DNA damage in nuclei of neurons protects neurons against polyglutamine expansion as well as DNA damage mediated toxicity. Post-translationally, cleaved by caspases downstream of the polyglutamine stretch. In terms of processing, myristoylated at Gly-522, following proteolytic cleavage at Asp-521. As to expression, expressed to a high degree in all the regions of the brain of adults and in meiotic cells of the testis. In addition, very low levels are detected in various non-neuronal tissues (heart, muscle, liver, lung and kidney).

Its subcellular location is the cytoplasm. It localises to the nucleus. The protein resides in the cytoplasmic vesicle. The protein localises to the autophagosome. Functionally, may play a role in microtubule-mediated transport or vesicle function. Promotes the formation of autophagic vesicles. This Rattus norvegicus (Rat) protein is Huntingtin (Htt).